Reading from the N-terminus, the 205-residue chain is FMN-dependent NADH:quinone oxidoreductase (205 aa).

Residues S10, 16-18 (SHS), and 96-99 (MYNF) each bind FMN.

The protein belongs to the azoreductase type 1 family. As to quaternary structure, homodimer. FMN serves as cofactor.

The enzyme catalyses 2 a quinone + NADH + H(+) = 2 a 1,4-benzosemiquinone + NAD(+). The catalysed reaction is N,N-dimethyl-1,4-phenylenediamine + anthranilate + 2 NAD(+) = 2-(4-dimethylaminophenyl)diazenylbenzoate + 2 NADH + 2 H(+). Functionally, quinone reductase that provides resistance to thiol-specific stress caused by electrophilic quinones. In terms of biological role, also exhibits azoreductase activity. Catalyzes the reductive cleavage of the azo bond in aromatic azo compounds to the corresponding amines. This is FMN-dependent NADH:quinone oxidoreductase from Nostoc punctiforme (strain ATCC 29133 / PCC 73102).